Consider the following 195-residue polypeptide: Anthranilate synthase component 2 (195 aa).

Residues 1-195 enclose the Glutamine amidotransferase type-1 domain; it reads MILIIDNYDS…LKNFLSLSYG (195 aa). Residue 52-54 participates in L-glutamine binding; it reads GPG. C79 functions as the Nucleophile; for GATase activity in the catalytic mechanism. L-glutamine-binding positions include Q83 and 129 to 130; that span reads SL. Residues H173 and E175 contribute to the active site.

As to quaternary structure, tetramer of two components I and two components II.

Its subcellular location is the plastid. It localises to the chloroplast. It catalyses the reaction chorismate + L-glutamine = anthranilate + pyruvate + L-glutamate + H(+). Its pathway is amino-acid biosynthesis; L-tryptophan biosynthesis; L-tryptophan from chorismate: step 1/5. This chain is Anthranilate synthase component 2 (trpG), found in Cyanidium caldarium (Red alga).